The primary structure comprises 316 residues: Cytochrome c biogenesis protein CcsA (316 aa).

Transmembrane regions (helical) follow at residues 9–29, 39–61, 70–90, 94–114, 143–163, 224–244, 257–271, and 289–309; these read IFVN…LINL, FSKN…RYLQ, LYES…ILEV, IGLS…FATL, LISY…LSLF, TISL…VWAN, ETWA…AIYL, and SMGF…GVGL.

Belongs to the CcmF/CycK/Ccl1/NrfE/CcsA family. As to quaternary structure, may interact with Ccs1.

It is found in the plastid. The protein resides in the chloroplast thylakoid membrane. Required during biogenesis of c-type cytochromes (cytochrome c6 and cytochrome f) at the step of heme attachment. This chain is Cytochrome c biogenesis protein CcsA, found in Adiantum capillus-veneris (Maidenhair fern).